The following is a 63-amino-acid chain: MNFYKIFVFVALILAISIGQSEAGWLKKLGKRIERIGQHTRDATIQGLGIAQQAANVAATARG.

The signal sequence occupies residues 1–23 (MNFYKIFVFVALILAISIGQSEA). Arginine 62 is subject to Arginine amide.

This sequence belongs to the cecropin family.

The protein localises to the secreted. Functionally, cecropins have lytic and antibacterial activity against several Gram-positive and Gram-negative bacteria. The sequence is that of Cecropin-C (CecC) from Drosophila mauritiana (Fruit fly).